A 780-amino-acid chain; its full sequence is Pentatricopeptide repeat-containing protein At1g79540 (780 aa).

PPR repeat units follow at residues 91 to 125 (SRES…GVSV), 126 to 160 (DSYC…DCRP), 161 to 196 (DVFT…NCSP), 197 to 231 (NLYT…GISP), 232 to 266 (NRVT…GNYP), 267 to 301 (DSVA…GFVL), 302 to 336 (GLRG…NIKP), 337 to 371 (DIIL…GISP), 372 to 406 (DTYC…ESFP), 407 to 441 (DACT…GCSP), 442 to 476 (SVAT…RPAS), 481 to 515 (LSHS…GSSP), 516 to 550 (DIVS…GLSP), 551 to 585 (DSVT…RHSP), 653 to 687 (TLGP…KILV), 688 to 722 (TPPS…NFKL), and 723 to 758 (MPRV…GYNV).

Belongs to the PPR family. P subfamily.

The sequence is that of Pentatricopeptide repeat-containing protein At1g79540 from Arabidopsis thaliana (Mouse-ear cress).